Consider the following 41-residue polypeptide: Large ribosomal subunit protein bL36 (41 aa).

The protein belongs to the bacterial ribosomal protein bL36 family.

The protein is Large ribosomal subunit protein bL36 of Sphingopyxis alaskensis (strain DSM 13593 / LMG 18877 / RB2256) (Sphingomonas alaskensis).